The sequence spans 98 residues: Growth-regulated protein homolog gamma (98 aa).

The N-terminal stretch at 1-29 is a signal peptide; it reads MAPAASSAPRLLRAAMLLLLLVAAGRRAA. Cystine bridges form between cysteine 39–cysteine 65 and cysteine 41–cysteine 81.

This sequence belongs to the intercrine alpha (chemokine CxC) family.

Its subcellular location is the secreted. The polypeptide is Growth-regulated protein homolog gamma (Bos taurus (Bovine)).